The chain runs to 167 residues: uncharacterized protein (167 aa).

Positions 1–25 (MPFSVTKFSLIFVALLLAEALVAQS) are cleaved as a signal peptide.

This is an uncharacterized protein from Caenorhabditis elegans.